Consider the following 187-residue polypeptide: Large ribosomal subunit protein uL5 (187 aa).

The protein belongs to the universal ribosomal protein uL5 family. As to quaternary structure, part of the 50S ribosomal subunit; part of the 5S rRNA/L5/L18/L25 subcomplex. Contacts the 5S rRNA and the P site tRNA. Forms a bridge to the 30S subunit in the 70S ribosome.

In terms of biological role, this is one of the proteins that bind and probably mediate the attachment of the 5S RNA into the large ribosomal subunit, where it forms part of the central protuberance. In the 70S ribosome it contacts protein S13 of the 30S subunit (bridge B1b), connecting the 2 subunits; this bridge is implicated in subunit movement. Contacts the P site tRNA; the 5S rRNA and some of its associated proteins might help stabilize positioning of ribosome-bound tRNAs. In Malacoplasma penetrans (strain HF-2) (Mycoplasma penetrans), this protein is Large ribosomal subunit protein uL5.